The sequence spans 562 residues: MLEEAGEVLESVLKASCLPLSFLLFVPAVLLLLGPPPAAEAAHESTVYRMQQYELGGQPYGTRSAVLNTEARTVEADVLSRRCVMMRLVDFSYEQYQKALRQSAGAVVIILPRSISSVPQDVVKQFMEIEPEMLAMETIVPVYFAVEDDELLSIYEQTRAASASQGSASAAEVLLHTATANGFQMVTSGAQSKAIHDWLIPSVEGRLTGLGGEDLPTVVIVAHYDSFGVAPWLSHGADSNGSGVSVLLELARLFSRLYTYRRTHAGYNLLFFASGGGKFNYQGTKRWLEDNLDHTDSSLLQDNVAFVLCLDTLGRGNSLHLHVSKPPKEGTLQHAFLRELEMVVASQFPEVKFSMVHKKINLAEDILAWEHERFAIRRLPAFTISHLESHRDSLRNSIMDRRSQVDTKALTQEYQDHCGGFDEGHLQPNREGSTCRSADLHGSDADPGGAARISDGLAEQSAQAAQLIDKDSTFLSTLEYYMGRYLKDVKQHHVKADKRDPEFVFYDQLKQVMNAYRVKPAIFDLLLAVCIAAYLGVAYVAVQNFGLLYRMIQRLSLKTKQQ.

Positions 1 to 41 (MLEEAGEVLESVLKASCLPLSFLLFVPAVLLLLGPPPAAEA) are cleaved as a signal peptide. At 42–521 (AHESTVYRMQ…VMNAYRVKPA (480 aa)) the chain is on the extracellular side. Asparagine 240 carries N-linked (GlcNAc...) asparagine glycosylation. Residues 420–447 (GFDEGHLQPNREGSTCRSADLHGSDADP) are disordered. A helical transmembrane segment spans residues 522-542 (IFDLLLAVCIAAYLGVAYVAV). At 543-562 (QNFGLLYRMIQRLSLKTKQQ) the chain is on the cytoplasmic side.

This sequence belongs to the nicastrin family. In terms of assembly, component of the multi-pass translocon (MPT) complex.

The protein localises to the endoplasmic reticulum membrane. Functionally, component of the multi-pass translocon (MPT) complex that mediates insertion of multi-pass membrane proteins into the lipid bilayer of membranes. The MPT complex takes over after the SEC61 complex: following membrane insertion of the first few transmembrane segments of proteins by the SEC61 complex, the MPT complex occludes the lateral gate of the SEC61 complex to promote insertion of subsequent transmembrane regions. May antagonize Nodal signaling and subsequent organization of axial structures during mesodermal patterning, via its interaction with NOMO. This Gallus gallus (Chicken) protein is BOS complex subunit NCLN (NCLN).